The chain runs to 203 residues: VDTGREQAKRVVRNGKKETTTLPLCWTAGANTVVSDQDQEPIRIWILTCWWFLTVGILLGSWWAYHELGWGGWWFWDPVENASFMPWVLATACIHSVILPLLHSWTLFLNIVTFLCCVLGTFSIRSGLLASVHSFATDDTRGIFLWWFFLLMTGISMILFYQMKQQASVRRTYKKEMVVARSTLVHLRHSARAQPRPVMLWKN.

2 helical membrane-spanning segments follow: residues 44–64 (IWIL…SWWA) and 143–163 (IFLW…FYQM).

The protein belongs to the CcmF/CycK/Ccl1/NrfE/CcsA family. Interacts with CCMFC, CCMFN1, CCMH and CYTC-1.

The protein localises to the mitochondrion inner membrane. Functionally, forms a complex with CCMFC, CCMFN1 and CCMH that performs the assembly of heme with c-type apocytochromes in mitochondria. The sequence is that of Cytochrome c biogenesis CcmF N-terminal-like mitochondrial protein 2 from Arabidopsis thaliana (Mouse-ear cress).